The sequence spans 267 residues: Hydroxyethylthiazole kinase 2 (267 aa).

M41 lines the substrate pocket. Residues K116 and T166 each contribute to the ATP site. G193 is a substrate binding site.

This sequence belongs to the Thz kinase family. It depends on Mg(2+) as a cofactor.

It carries out the reaction 5-(2-hydroxyethyl)-4-methylthiazole + ATP = 4-methyl-5-(2-phosphooxyethyl)-thiazole + ADP + H(+). It functions in the pathway cofactor biosynthesis; thiamine diphosphate biosynthesis; 4-methyl-5-(2-phosphoethyl)-thiazole from 5-(2-hydroxyethyl)-4-methylthiazole: step 1/1. Catalyzes the phosphorylation of the hydroxyl group of 4-methyl-5-beta-hydroxyethylthiazole (THZ). In Streptococcus pneumoniae (strain Hungary19A-6), this protein is Hydroxyethylthiazole kinase 2.